The following is a 340-amino-acid chain: NADH-quinone oxidoreductase subunit H (340 aa).

A run of 8 helical transmembrane segments spans residues 4–24 (TIGI…PLLI), 78–98 (YLFV…WAVI), 113–133 (VLYL…AGWA), 151–171 (VSYE…AGSM), 184–204 (MLHW…ISGI), 244–264 (SMIL…LSPF), 273–293 (IFFI…FLFV), and 316–336 (VLIP…VAHV).

This sequence belongs to the complex I subunit 1 family. NDH-1 is composed of 14 different subunits. Subunits NuoA, H, J, K, L, M, N constitute the membrane sector of the complex.

It localises to the cell inner membrane. The catalysed reaction is a quinone + NADH + 5 H(+)(in) = a quinol + NAD(+) + 4 H(+)(out). NDH-1 shuttles electrons from NADH, via FMN and iron-sulfur (Fe-S) centers, to quinones in the respiratory chain. The immediate electron acceptor for the enzyme in this species is believed to be ubiquinone. Couples the redox reaction to proton translocation (for every two electrons transferred, four hydrogen ions are translocated across the cytoplasmic membrane), and thus conserves the redox energy in a proton gradient. This subunit may bind ubiquinone. This Legionella pneumophila subsp. pneumophila (strain Philadelphia 1 / ATCC 33152 / DSM 7513) protein is NADH-quinone oxidoreductase subunit H.